Reading from the N-terminus, the 189-residue chain is UPF0301 protein RF_0044 (189 aa).

The protein belongs to the UPF0301 (AlgH) family.

This chain is UPF0301 protein RF_0044, found in Rickettsia felis (strain ATCC VR-1525 / URRWXCal2) (Rickettsia azadi).